Consider the following 92-residue polypeptide: Small ribosomal subunit protein bS21 (92 aa).

The segment at 37–92 (QREGTFREMKRRNHYEKPSEKKARQKAEAIRRARKLARKRAQREGLIAKRGGTTRR) is disordered. The span at 51–67 (YEKPSEKKARQKAEAIR) shows a compositional bias: basic and acidic residues. The span at 68-77 (RARKLARKRA) shows a compositional bias: basic residues.

Belongs to the bacterial ribosomal protein bS21 family.

The sequence is that of Small ribosomal subunit protein bS21 from Maricaulis maris (strain MCS10) (Caulobacter maris).